We begin with the raw amino-acid sequence, 133 residues long: Snaclec echicetin subunit alpha (133 aa).

3 cysteine pairs are disulfide-bonded: Cys-4–Cys-15, Cys-31–Cys-127, and Cys-102–Cys-119. The region spanning 11–128 (YEGHCYQLFR…CEFKFPFVCK (118 aa)) is the C-type lectin domain.

Belongs to the snaclec family. As to quaternary structure, heterodimer of subunits alpha and beta; disulfide-linked. Forms an active complex with the pentameric immunoglobuline Mkappa (IgMkappa). As to expression, expressed by the venom gland.

It localises to the secreted. Functionally, echicetin itself inhibits aggregation of washed platelets induced by vWF, thrombin or alboaggregin-A. However, when complexed with the pentameric plasma immunoglobulin Mkappa (IgMkappa), echicetin binds specifically to GPIb and activates platelets. This is caused by P-selectin expression and activation of alpha-IIb/beta-3 as well as tyrosine phosphorylation of several signal transduction molecules, including p53/56(LYN), p64, p72(SYK), p70 to p90, and p120. In vivo, it induces thrombocytopenia when injected into mice, probably accounting of activation of platelets rather than inhibition. In Echis carinatus sochureki (Saw-scaled viper), this protein is Snaclec echicetin subunit alpha.